The following is a 295-amino-acid chain: MRARHRVALKVLADLRSWAAEYPQVLEATPIEALAISTAAISPWRGANELRLSAPDVRCGPTPLDDHVEQNVRSLDELDDLFGRCEAIVRGGDRDDGHPLLASLSGWQSALERAPHYPKLAGLWGDRFAEALRGERYDWTAGLARDRGEGPSDPQEYLTYAASSNAWITHFPRWATSDRDDLLDGLPVLDNALEAIEVAVRLSNDLATFERERAEPGQNNILMYDTSPDWVHDELDRHSRKAQEQLDPLATAGFPPAVELLRLLDWSVTFYSGADFRGWGSDRDLTGPSGLPSDM.

It belongs to the terpene synthase family. In terms of assembly, monomer. Requires a divalent metal cation as cofactor.

It catalyses the reaction ent-copalyl diphosphate = ent-pimara-9(11),15-diene + diphosphate. It functions in the pathway antibiotic biosynthesis. In terms of biological role, involved in viguiepinol biosynthesis. Catalyzes the conversion of copalyl diphosphate (ent-CDP) into pimara-9(11),15-diene (PMD). This is Ent-pimara-9(11),15-diene synthase from Streptomyces sp. (strain KO-3988).